The sequence spans 260 residues: Adenosylcobinamide-GDP ribazoletransferase (260 aa).

Helical transmembrane passes span 42-62, 64-84, 117-137, 144-164, 192-212, 214-234, and 240-260; these read PLAGGILGLLAGVALLIANAI, LPPLAAALIAIGALAAMTGAL, FAALTLVIWTGVKASLLMAII, YALLALIGTEAASRAGMLAFW, GLGLALLAIGFLPSGGMVALI, ALVLMTVVLFGFARLCMAKIG, and TLGAAQQIGSLAALIGLVMAL.

The protein belongs to the CobS family. Mg(2+) is required as a cofactor.

The protein localises to the cell inner membrane. The catalysed reaction is alpha-ribazole + adenosylcob(III)inamide-GDP = adenosylcob(III)alamin + GMP + H(+). It catalyses the reaction alpha-ribazole 5'-phosphate + adenosylcob(III)inamide-GDP = adenosylcob(III)alamin 5'-phosphate + GMP + H(+). Its pathway is cofactor biosynthesis; adenosylcobalamin biosynthesis; adenosylcobalamin from cob(II)yrinate a,c-diamide: step 7/7. Joins adenosylcobinamide-GDP and alpha-ribazole to generate adenosylcobalamin (Ado-cobalamin). Also synthesizes adenosylcobalamin 5'-phosphate from adenosylcobinamide-GDP and alpha-ribazole 5'-phosphate. This chain is Adenosylcobinamide-GDP ribazoletransferase, found in Brucella melitensis biotype 1 (strain ATCC 23456 / CCUG 17765 / NCTC 10094 / 16M).